Here is a 79-residue protein sequence, read N- to C-terminus: Crassicorin-I (79 aa).

Residues Met-1–Ala-19 form the signal peptide. The propeptide occupies Arg-20–Arg-39. 3 disulfide bridges follow: Cys-43–Cys-76, Cys-45–Cys-69, and Cys-59–Cys-77.

This sequence belongs to the sea anemone type 3 (BDS) potassium channel toxin family. As to expression, highly expressed by the mesenteries. Moderately expressed by the pharynx. Weakly expressed by the gonad and pedal disk. No expression in tentacle.

Its subcellular location is the secreted. The protein resides in the nematocyst. In terms of biological role, peptide with both antimicrobial and neurotoxin activities. Cationic AMP with antibacterial activity against both Gram-positive bacteria (B.subtilis, MIC=11.49 ug/mL) and Gram-negative bacteria (E.coli (MIC=12.21 ug/mL) and S.enterica (MIC=11.95 ug/mL)). Shows no significant antimicrobial activity against bacteria S.aureus and P.aeruginosa, as well as the fungus C.albicans. In vivo, induces reversible paralytic activity towards the shrimp P.paucidens. May act by impairing sodium or potassium channels in the prey. The polypeptide is Crassicorin-I (Urticina crassicornis (Mottled anemone)).